Consider the following 90-residue polypeptide: DNA-directed RNA polymerase subunit Rpo5 (90 aa).

This sequence belongs to the archaeal Rpo5/eukaryotic RPB5 RNA polymerase subunit family. In terms of assembly, part of the RNA polymerase complex.

It localises to the cytoplasm. The catalysed reaction is RNA(n) + a ribonucleoside 5'-triphosphate = RNA(n+1) + diphosphate. DNA-dependent RNA polymerase (RNAP) catalyzes the transcription of DNA into RNA using the four ribonucleoside triphosphates as substrates. In Aeropyrum pernix (strain ATCC 700893 / DSM 11879 / JCM 9820 / NBRC 100138 / K1), this protein is DNA-directed RNA polymerase subunit Rpo5.